The following is a 337-amino-acid chain: Zinc finger protein 488 (337 aa).

Over residues 1 to 10 the composition is skewed to polar residues; sequence MAAGTSTLLS. 3 disordered regions span residues 1-32, 55-83, and 146-179; these read MAAG…SVEK, SDTA…PRLD, and SAWP…MLLA. Residues 69 to 184 form an important for transcriptional repression activity region; sequence TELSLPTAPN…PMLLAGGSAE (116 aa). 2 C2H2-type zinc fingers span residues 272-299 and 314-336; these read NWCA…KREH and LTCP…MASH. The Nuclear localization signal signature appears at 295–302; sequence HKREHVGP.

The protein belongs to the krueppel C2H2-type zinc-finger protein family. In terms of assembly, interacts with OLIG2.

The protein localises to the nucleus. In terms of biological role, transcriptional repressor. Plays a role in oligodendrocyte differentiation, together with OLIG2. Mediates Notch signaling-activated formation of oligodendrocyte precursors. Promotes differentiation of adult neural stem progenitor cells (NSPCs) into mature oligodendrocytes and contributes to remyelination following nerve injury. This is Zinc finger protein 488 (Znf488) from Mus musculus (Mouse).